A 183-amino-acid chain; its full sequence is Ribulose bisphosphate carboxylase small subunit, chloroplastic 5 (183 aa).

Residues 1-42 constitute a chloroplast transit peptide; it reads MAAAMMNKSVLLNKQCGKPAAVPKVVMSKGGFARTSAVNKNR.

The protein belongs to the RuBisCO small chain family. In terms of assembly, heterohexadecamer of 8 large and 8 small subunits.

The protein localises to the plastid. The protein resides in the chloroplast. In terms of biological role, ruBisCO catalyzes two reactions: the carboxylation of D-ribulose 1,5-bisphosphate, the primary event in carbon dioxide fixation, as well as the oxidative fragmentation of the pentose substrate. Both reactions occur simultaneously and in competition at the same active site. Although the small subunit is not catalytic it is essential for maximal activity. This is Ribulose bisphosphate carboxylase small subunit, chloroplastic 5 from Acetabularia acetabulum (Mermaid's wine glass).